A 287-amino-acid chain; its full sequence is Protease HtpX (287 aa).

2 helical membrane-spanning segments follow: residues 4–24 (IFLLIATNFAILLVASIVMSI) and 33–53 (GGLLVFAAIFGFGGSFISLAI). Residue His-139 participates in Zn(2+) binding. Glu-140 is an active-site residue. Position 143 (His-143) interacts with Zn(2+). Helical transmembrane passes span 154 to 174 (LIQGVVNTFVIFAARVVAGII) and 195 to 215 (AVVFVLDMLFGILASMIVAYF). Position 220 (Glu-220) interacts with Zn(2+).

The protein belongs to the peptidase M48B family. Requires Zn(2+) as cofactor.

It is found in the cell inner membrane. The sequence is that of Protease HtpX from Shewanella frigidimarina (strain NCIMB 400).